We begin with the raw amino-acid sequence, 690 residues long: Proprotein convertase subtilisin/kexin type 9 (690 aa).

Positions 1-28 (MGTVRSRRLWWPLPLLLLLLLGPAGARA) are cleaved as a signal peptide. A propeptide spanning residues 29-150 (QEDDDGDYEE…IEEDSYVFAQ (122 aa)) is cleaved from the precursor. Y36 carries the sulfotyrosine modification. The residue at position 45 (S45) is a Phosphoserine. The Inhibitor I9 domain occupies 75–147 (TYVVVLKEET…VDYIEEDSYV (73 aa)). The Peptidase S8 domain maps to 153–459 (PWNLERITPA…GWQLFCRTVW (307 aa)). Residues D184 and H224 each act as charge relay system in the active site. Intrachain disulfides connect C221/C253 and C321/C356. S384 acts as the Charge relay system in catalysis. A C-terminal domain region spans residues 448–690 (GAGWQLFCRT…HLAQASQELQ (243 aa)). Disulfide bonds link C455–C525, C475–C524, and C484–C507. N-linked (GlcNAc...) asparagine glycosylation is present at N531. Cystine bridges form between C532–C599, C550–C598, C560–C586, C606–C677, C624–C676, and C633–C652. S686 carries the phosphoserine modification.

Belongs to the peptidase S8 family. In terms of assembly, monomer. Can self-associate to form dimers and higher multimers which may have increased LDLR degrading activity. The precursor protein but not the mature protein may form multimers. Interacts with APOB, VLDLR, LRP8/APOER2 and BACE1. The full-length immature form (pro-PCSK9) interacts with SCNN1A, SCNN1B and SCNN1G. The pro-PCSK9 form (via C-terminal domain) interacts with LDLR. Interacts (via the C-terminal domain) with ANXA2 (via repeat Annexin 1); the interaction inhibits the degradation of LDLR. Ca(2+) is required as a cofactor. Cleavage by furin and PCSK5 generates a truncated inactive protein that is unable to induce LDLR degradation. Post-translationally, undergoes autocatalytic cleavage in the endoplasmic reticulum to release the propeptide from the N-terminus and the cleavage of the propeptide is strictly required for its maturation and activation. The cleaved propeptide however remains associated with the catalytic domain through non-covalent interactions, preventing potential substrates from accessing its active site. As a result, it is secreted from cells as a propeptide-containing, enzymatically inactive protein. In terms of processing, phosphorylation protects the propeptide against proteolysis.

It is found in the cytoplasm. It localises to the secreted. Its subcellular location is the endosome. The protein resides in the lysosome. The protein localises to the cell surface. It is found in the endoplasmic reticulum. It localises to the golgi apparatus. Its activity is regulated as follows. Its proteolytic activity is autoinhibited by the non-covalent binding of the propeptide to the catalytic domain. Inhibited by EGTA. In terms of biological role, crucial player in the regulation of plasma cholesterol homeostasis. Binds to low-density lipid receptor family members: low density lipoprotein receptor (LDLR), very low density lipoprotein receptor (VLDLR), apolipoprotein E receptor (LRP1/APOER) and apolipoprotein receptor 2 (LRP8/APOER2), and promotes their degradation in intracellular acidic compartments. Acts via a non-proteolytic mechanism to enhance the degradation of the hepatic LDLR through a clathrin LDLRAP1/ARH-mediated pathway. May prevent the recycling of LDLR from endosomes to the cell surface or direct it to lysosomes for degradation. Can induce ubiquitination of LDLR leading to its subsequent degradation. Inhibits intracellular degradation of APOB via the autophagosome/lysosome pathway in a LDLR-independent manner. Involved in the disposal of non-acetylated intermediates of BACE1 in the early secretory pathway. Inhibits epithelial Na(+) channel (ENaC)-mediated Na(+) absorption by reducing ENaC surface expression primarily by increasing its proteasomal degradation. Regulates neuronal apoptosis via modulation of LRP8/APOER2 levels and related anti-apoptotic signaling pathways. The polypeptide is Proprotein convertase subtilisin/kexin type 9 (PCSK9) (Lagothrix lagotricha (Brown woolly monkey)).